A 154-amino-acid polypeptide reads, in one-letter code: Phosphopantetheine adenylyltransferase (154 aa).

Threonine 10 is a substrate binding site. ATP contacts are provided by residues 10–11 (TF) and histidine 18. Substrate contacts are provided by lysine 42, leucine 74, and arginine 88. ATP-binding positions include 89-91 (GLR), glutamate 99, and 124-130 (NAFISSS).

This sequence belongs to the bacterial CoaD family. Homohexamer. Mg(2+) serves as cofactor.

The protein resides in the cytoplasm. It catalyses the reaction (R)-4'-phosphopantetheine + ATP + H(+) = 3'-dephospho-CoA + diphosphate. Its pathway is cofactor biosynthesis; coenzyme A biosynthesis; CoA from (R)-pantothenate: step 4/5. Reversibly transfers an adenylyl group from ATP to 4'-phosphopantetheine, yielding dephospho-CoA (dPCoA) and pyrophosphate. This Nautilia profundicola (strain ATCC BAA-1463 / DSM 18972 / AmH) protein is Phosphopantetheine adenylyltransferase.